We begin with the raw amino-acid sequence, 445 residues long: MRLSRYFLPVLKENPSEAQIVSHRFMLRAGMIKQQAAGIYSWLPLGFKALKRVEQIVHEEQIRAGHIPLLMPTLQPADLWRESGRYDDYGEEMLRITDRHKRDMLYGPTNEEMITDIFRSHVNSYKDLPLTLYHVQWKFRDEIRPRFGVMRGREFLMKDGYNFDLDFDSAIHAYNRHMVSYLRTYERMGLQAIPMRAASGPIGGDNTHEFLVLASTGESEVFYDAAITDLKFGDRVVDYDSREECEAIVKEWTTPYARTDETHDEAIFNAIPEERRRTSRGIEVGQIFYFGTKYSEPMGATVVTADGARVPVHMGSHGIGVSRLLGAIIEASHDDKGIIWPEGVTPFHVGIVNLKQGDSSTDLACEALYRDLSAKGLEPLYDDRDERAGAKFATMDLIGLPWRITVGPRGIAAGKVELTNRRTGESEEMSSGAAVDRLAQIYAGI.

Belongs to the class-II aminoacyl-tRNA synthetase family. ProS type 2 subfamily. As to quaternary structure, homodimer.

The protein resides in the cytoplasm. It carries out the reaction tRNA(Pro) + L-proline + ATP = L-prolyl-tRNA(Pro) + AMP + diphosphate. Functionally, catalyzes the attachment of proline to tRNA(Pro) in a two-step reaction: proline is first activated by ATP to form Pro-AMP and then transferred to the acceptor end of tRNA(Pro). The sequence is that of Proline--tRNA ligase from Cereibacter sphaeroides (strain ATCC 17025 / ATH 2.4.3) (Rhodobacter sphaeroides).